We begin with the raw amino-acid sequence, 239 residues long: Probable transcriptional regulatory protein Pnuc_0618 (239 aa).

Residues 1–21 (MAGHSKWANIQHRKGRQDEKR) are disordered.

Belongs to the TACO1 family.

The protein resides in the cytoplasm. This Polynucleobacter asymbioticus (strain DSM 18221 / CIP 109841 / QLW-P1DMWA-1) (Polynucleobacter necessarius subsp. asymbioticus) protein is Probable transcriptional regulatory protein Pnuc_0618.